Reading from the N-terminus, the 196-residue chain is Nucleoside triphosphate pyrophosphatase (196 aa).

Aspartate 72 acts as the Proton acceptor in catalysis.

It belongs to the Maf family. It depends on a divalent metal cation as a cofactor.

Its subcellular location is the cytoplasm. It catalyses the reaction a ribonucleoside 5'-triphosphate + H2O = a ribonucleoside 5'-phosphate + diphosphate + H(+). The catalysed reaction is a 2'-deoxyribonucleoside 5'-triphosphate + H2O = a 2'-deoxyribonucleoside 5'-phosphate + diphosphate + H(+). In terms of biological role, nucleoside triphosphate pyrophosphatase. May have a dual role in cell division arrest and in preventing the incorporation of modified nucleotides into cellular nucleic acids. The polypeptide is Nucleoside triphosphate pyrophosphatase (Chlamydia muridarum (strain MoPn / Nigg)).